Consider the following 133-residue polypeptide: Small ribosomal subunit protein uS19 (133 aa).

The protein belongs to the universal ribosomal protein uS19 family.

Functionally, protein S19 forms a complex with S13 that binds strongly to the 16S ribosomal RNA. The sequence is that of Small ribosomal subunit protein uS19 from Thermococcus gammatolerans (strain DSM 15229 / JCM 11827 / EJ3).